Reading from the N-terminus, the 346-residue chain is tRNA N6-adenosine threonylcarbamoyltransferase (346 aa).

Fe cation is bound by residues H111 and H115. Residues 134 to 138 (LVSGG), D167, G180, and N279 contribute to the substrate site. Residue D307 participates in Fe cation binding.

This sequence belongs to the KAE1 / TsaD family. Fe(2+) is required as a cofactor.

It is found in the cytoplasm. The catalysed reaction is L-threonylcarbamoyladenylate + adenosine(37) in tRNA = N(6)-L-threonylcarbamoyladenosine(37) in tRNA + AMP + H(+). Functionally, required for the formation of a threonylcarbamoyl group on adenosine at position 37 (t(6)A37) in tRNAs that read codons beginning with adenine. Is involved in the transfer of the threonylcarbamoyl moiety of threonylcarbamoyl-AMP (TC-AMP) to the N6 group of A37, together with TsaE and TsaB. TsaD likely plays a direct catalytic role in this reaction. This is tRNA N6-adenosine threonylcarbamoyltransferase from Burkholderia pseudomallei (strain K96243).